Consider the following 305-residue polypeptide: uncharacterized protein (305 aa).

Positions methionine 1–serine 29 are cleaved as a signal peptide. Cysteine 30 carries N-palmitoyl cysteine lipidation. The S-diacylglycerol cysteine moiety is linked to residue cysteine 30. Positions phenylalanine 234–alanine 265 are disordered. Over residues proline 237–asparagine 258 the composition is skewed to polar residues.

It is found in the cell membrane. This is an uncharacterized protein from Mycoplasma pneumoniae (strain ATCC 29342 / M129 / Subtype 1) (Mycoplasmoides pneumoniae).